The primary structure comprises 103 residues: uncharacterized protein (103 aa).

This is an uncharacterized protein from Dictyostelium discoideum (Social amoeba).